The sequence spans 190 residues: Lipid A acyltransferase PagP (190 aa).

A signal peptide spans 1 to 18 (MKRLISCLTIICALNASA). Active-site residues include histidine 60, aspartate 103, and serine 104.

Belongs to the lipid A palmitoyltransferase family. Homodimer.

It localises to the cell outer membrane. It catalyses the reaction a lipid A + a 1,2-diacyl-sn-glycero-3-phosphocholine = a hepta-acyl lipid A + a 2-acyl-sn-glycero-3-phosphocholine. It carries out the reaction a lipid IVA + a 1,2-diacyl-sn-glycero-3-phosphocholine = a lipid IVB + a 2-acyl-sn-glycero-3-phosphocholine. The enzyme catalyses a lipid IIA + a 1,2-diacyl-sn-glycero-3-phosphocholine = a lipid IIB + a 2-acyl-sn-glycero-3-phosphocholine. Functionally, transfers a fatty acid residue from the sn-1 position of a phospholipid to the N-linked hydroxyfatty acid chain on the proximal unit of lipid A or its precursors. This Legionella pneumophila serogroup 1 (strain 2300/99 Alcoy) protein is Lipid A acyltransferase PagP.